A 354-amino-acid polypeptide reads, in one-letter code: DNA integrity scanning protein DisA (354 aa).

One can recognise a DAC domain in the interval 6–144; that stretch reads DDELKKILKI…GDIKYVLRDS (139 aa). ATP is bound by residues Gly73, Leu91, and 104 to 108; that span reads TRHRT.

It belongs to the DisA family. Homooctamer. The cofactor is Mg(2+).

The catalysed reaction is 2 ATP = 3',3'-c-di-AMP + 2 diphosphate. Participates in a DNA-damage check-point that is active prior to asymmetric division when DNA is damaged. DisA forms globular foci that rapidly scan along the chromosomes during sporulation, searching for lesions. When a lesion is present, DisA pauses at the lesion site. This triggers a cellular response that culminates in a temporary block in sporulation initiation. Functionally, also has diadenylate cyclase activity, catalyzing the condensation of 2 ATP molecules into cyclic di-AMP (c-di-AMP). c-di-AMP acts as a signaling molecule that couples DNA integrity with progression of sporulation. The rise in c-di-AMP level generated by DisA while scanning the chromosome, operates as a positive signal that advances sporulation; upon encountering a lesion, the DisA focus arrests at the damaged site and halts c-di-AMP synthesis. This Clostridium perfringens (strain SM101 / Type A) protein is DNA integrity scanning protein DisA.